We begin with the raw amino-acid sequence, 147 residues long: Endoribonuclease YbeY (147 aa).

The Zn(2+) site is built by histidine 109, histidine 113, and histidine 119.

The protein belongs to the endoribonuclease YbeY family. Zn(2+) is required as a cofactor.

It localises to the cytoplasm. Single strand-specific metallo-endoribonuclease involved in late-stage 70S ribosome quality control and in maturation of the 3' terminus of the 16S rRNA. This Magnetococcus marinus (strain ATCC BAA-1437 / JCM 17883 / MC-1) protein is Endoribonuclease YbeY.